Consider the following 243-residue polypeptide: Small ribosomal subunit protein eS4 (243 aa).

The 63-residue stretch at 43–105 (IPLLYIVRDY…TGEHYRVLPN (63 aa)) folds into the S4 RNA-binding domain.

The protein belongs to the eukaryotic ribosomal protein eS4 family.

The protein is Small ribosomal subunit protein eS4 (rps4e) of Pyrococcus horikoshii (strain ATCC 700860 / DSM 12428 / JCM 9974 / NBRC 100139 / OT-3).